The primary structure comprises 475 residues: Sulfate adenylyltransferase subunit 1 (475 aa).

Residues 25–239 (KSLLRFLTCG…EVLETVEIQR (215 aa)) form the tr-type G domain. The interval 34 to 41 (GSVDDGKS) is G1. Residue 34–41 (GSVDDGKS) coordinates GTP. The segment at 92 to 96 (GITID) is G2. The interval 113 to 116 (DTPG) is G3. GTP-binding positions include 113–117 (DTPGH) and 168–171 (NKMD). The G4 stretch occupies residues 168-171 (NKMD). A G5 region spans residues 206–208 (SAL).

This sequence belongs to the TRAFAC class translation factor GTPase superfamily. Classic translation factor GTPase family. CysN/NodQ subfamily. In terms of assembly, heterodimer composed of CysD, the smaller subunit, and CysN.

The catalysed reaction is sulfate + ATP + H(+) = adenosine 5'-phosphosulfate + diphosphate. The protein operates within sulfur metabolism; hydrogen sulfide biosynthesis; sulfite from sulfate: step 1/3. Functionally, with CysD forms the ATP sulfurylase (ATPS) that catalyzes the adenylation of sulfate producing adenosine 5'-phosphosulfate (APS) and diphosphate, the first enzymatic step in sulfur assimilation pathway. APS synthesis involves the formation of a high-energy phosphoric-sulfuric acid anhydride bond driven by GTP hydrolysis by CysN coupled to ATP hydrolysis by CysD. The sequence is that of Sulfate adenylyltransferase subunit 1 from Escherichia coli (strain UTI89 / UPEC).